The chain runs to 704 residues: Elongation factor G (704 aa).

Positions 10 to 290 (KKVRNIGIMA…AVVDYLPSPL (281 aa)) constitute a tr-type G domain. Residues 19 to 26 (AHIDAGKT), 83 to 87 (DTPGH), and 137 to 140 (NKMD) each bind GTP.

Belongs to the TRAFAC class translation factor GTPase superfamily. Classic translation factor GTPase family. EF-G/EF-2 subfamily.

The protein resides in the cytoplasm. Functionally, catalyzes the GTP-dependent ribosomal translocation step during translation elongation. During this step, the ribosome changes from the pre-translocational (PRE) to the post-translocational (POST) state as the newly formed A-site-bound peptidyl-tRNA and P-site-bound deacylated tRNA move to the P and E sites, respectively. Catalyzes the coordinated movement of the two tRNA molecules, the mRNA and conformational changes in the ribosome. This Kocuria rhizophila (strain ATCC 9341 / DSM 348 / NBRC 103217 / DC2201) protein is Elongation factor G.